The following is a 324-amino-acid chain: BURP domain-containing protein 5 (324 aa).

Residues 1–30 (MCATLCTLLDEISILILMLLLIQLEIRVSA) form the signal peptide. The 215-residue stretch at 109-323 (FFLETNLQSS…QPDVVVWTRR (215 aa)) folds into the BURP domain.

Expressed in panicles.

This is BURP domain-containing protein 5 (BURP5) from Oryza sativa subsp. japonica (Rice).